Here is a 1013-residue protein sequence, read N- to C-terminus: Ephrin type-B receptor 6 (1013 aa).

Residues 1–31 (MASENTAGSGSRVAGMVYSLWLLVLGPSVLA) form the signal peptide. Residues 32-590 (LEEVLLDTTG…LPEKLSLVIG (559 aa)) are Extracellular-facing. One can recognise an Eph LBD domain in the interval 33 to 231 (EEVLLDTTGE…FSYTCPSVLR (199 aa)). 2 consecutive Fibronectin type-III domains span residues 363–478 (PPSA…TSHE) and 479–574 (VPSA…TLPQ). Asn-472 carries an N-linked (GlcNAc...) asparagine glycan. A helical membrane pass occupies residues 591–611 (SILGALAFLLLAAITVLAVIF). Topologically, residues 612-1013 (QRKRRGTGYT…HLRQPGSVEV (402 aa)) are cytoplasmic. Positions 662-911 (IKIEEVIGAG…QLVAAFDKMI (250 aa)) constitute a Protein kinase domain. 668-676 (IGAGSFGEV) is an ATP binding site. In terms of domain architecture, SAM spans 940 to 1004 (PCLDSPQAWL…LHNIQLLQQH (65 aa)). The PDZ-binding signature appears at 1011-1013 (VEV).

Belongs to the protein kinase superfamily. Tyr protein kinase family. Ephrin receptor subfamily. As to quaternary structure, interacts with CBL and EPHB1. Interacts with FYN; this interaction takes place in a ligand-independent manner. Ligand-binding increases phosphorylation on tyrosine residues. Phosphorylation on tyrosine residues is mediated by transphosphorylation by the catalytically active EPHB1 in a ligand-independent manner. Tyrosine phosphorylation of the receptor may act as a switch on the functional transition from cell adhesion/attraction to de-adhesion/repulsion.

The protein resides in the membrane. Kinase-defective receptor for members of the ephrin-B family. Binds to ephrin-B1 and ephrin-B2. Modulates cell adhesion and migration by exerting both positive and negative effects upon stimulation with ephrin-B2. Inhibits JNK activation, T-cell receptor-induced IL-2 secretion and CD25 expression upon stimulation with ephrin-B2. The protein is Ephrin type-B receptor 6 (Ephb6) of Rattus norvegicus (Rat).